Consider the following 279-residue polypeptide: 2'-N-acetylparomamine deacetylase (279 aa).

The Zn(2+) site is built by H31, D34, and H157. The disordered stretch occupies residues 245–279 (PRRWTGGTAGAGHAAGRRGAPHTERVWTPAPAGAR). A compositionally biased stretch (low complexity) spans 246 to 258 (RRWTGGTAGAGHA).

Belongs to the PIGL family. It depends on Zn(2+) as a cofactor.

It carries out the reaction 2'-N-acetylparomamine + H2O = paromamine + acetate. The catalysed reaction is 2'''-acetyl-6'''-hydroxyneomycin C + H2O = 6'''-deamino-6'''-hydroxyneomycin C + acetate. Its pathway is antibiotic biosynthesis; neomycin biosynthesis. Its function is as follows. Deacetylase involved in the biosynthesis of neomycin by mediating 2 steps of the pathway. Deacetylates both 2'-N-acetylparomamine and 2'''-acetyl-6'''-hydroxyneomycin C. The protein is 2'-N-acetylparomamine deacetylase (neoL) of Streptomyces fradiae (Streptomyces roseoflavus).